A 222-amino-acid chain; its full sequence is MLMMLMMIIGITGGSGAGKTTLTQNIKEIFGEDVSVICQDNYYKDRSHYTPEERANLIWDHPDAFDNDLLISDIKRLKNNEIVQAPVFDFVLGNRSKTEIETIYPSKVILVEGILVFENQELRDLMDIRIFVDTDADERILRRMVRDVQEQGDSVDCIMSRYLSMVKPMHEKFIEPTRKYADIIVHGNYRQNVVTNILSQKIKNHLENALESDETYYMVNSK.

13-20 (GGSGAGKT) contributes to the ATP binding site.

It belongs to the uridine kinase family.

It localises to the cytoplasm. It catalyses the reaction uridine + ATP = UMP + ADP + H(+). The enzyme catalyses cytidine + ATP = CMP + ADP + H(+). It functions in the pathway pyrimidine metabolism; CTP biosynthesis via salvage pathway; CTP from cytidine: step 1/3. It participates in pyrimidine metabolism; UMP biosynthesis via salvage pathway; UMP from uridine: step 1/1. This chain is Uridine kinase, found in Chlamydia pneumoniae (Chlamydophila pneumoniae).